The chain runs to 496 residues: Glycerol kinase (496 aa).

Position 11 (T11) interacts with ADP. 3 residues coordinate ATP: T11, T12, and S13. T11 is a binding site for sn-glycerol 3-phosphate. An ADP-binding site is contributed by R15. Sn-glycerol 3-phosphate contacts are provided by R81, E82, Y133, and D242. The glycerol site is built by R81, E82, Y133, D242, and Q243. ADP is bound by residues T264 and G307. ATP contacts are provided by T264, G307, and Q311. N413 contributes to the ADP binding site.

It belongs to the FGGY kinase family.

It carries out the reaction glycerol + ATP = sn-glycerol 3-phosphate + ADP + H(+). Its pathway is polyol metabolism; glycerol degradation via glycerol kinase pathway; sn-glycerol 3-phosphate from glycerol: step 1/1. Its activity is regulated as follows. Inhibited by fructose 1,6-bisphosphate (FBP). Its function is as follows. Key enzyme in the regulation of glycerol uptake and metabolism. Catalyzes the phosphorylation of glycerol to yield sn-glycerol 3-phosphate. This Borrelia duttonii (strain Ly) protein is Glycerol kinase.